A 328-amino-acid polypeptide reads, in one-letter code: Malate dehydrogenase (328 aa).

An NAD(+)-binding site is contributed by 13 to 19 (GAAGQIS). Residues R94 and R100 each contribute to the substrate site. NAD(+)-binding positions include N107, Q114, and 131–133 (VGN). Substrate is bound by residues N133 and R164. Residue H189 is the Proton acceptor of the active site.

The protein belongs to the LDH/MDH superfamily. MDH type 2 family.

The catalysed reaction is (S)-malate + NAD(+) = oxaloacetate + NADH + H(+). Its function is as follows. Catalyzes the reversible oxidation of malate to oxaloacetate. In Alcanivorax borkumensis (strain ATCC 700651 / DSM 11573 / NCIMB 13689 / SK2), this protein is Malate dehydrogenase.